The following is a 306-amino-acid chain: tRNA-cytidine(32) 2-sulfurtransferase (306 aa).

Residues 44 to 49 (SGGKDS) carry the PP-loop motif motif. C119, C122, and C210 together coordinate [4Fe-4S] cluster.

Belongs to the TtcA family. In terms of assembly, homodimer. It depends on Mg(2+) as a cofactor. Requires [4Fe-4S] cluster as cofactor.

The protein localises to the cytoplasm. The catalysed reaction is cytidine(32) in tRNA + S-sulfanyl-L-cysteinyl-[cysteine desulfurase] + AH2 + ATP = 2-thiocytidine(32) in tRNA + L-cysteinyl-[cysteine desulfurase] + A + AMP + diphosphate + H(+). It functions in the pathway tRNA modification. Its function is as follows. Catalyzes the ATP-dependent 2-thiolation of cytidine in position 32 of tRNA, to form 2-thiocytidine (s(2)C32). The sulfur atoms are provided by the cysteine/cysteine desulfurase (IscS) system. This is tRNA-cytidine(32) 2-sulfurtransferase from Photorhabdus laumondii subsp. laumondii (strain DSM 15139 / CIP 105565 / TT01) (Photorhabdus luminescens subsp. laumondii).